The following is a 228-amino-acid chain: Lipoprotein-releasing system ATP-binding protein LolD (228 aa).

One can recognise an ABC transporter domain in the interval 6-228 (IKCLNVVKGY…EAGVLNKQGQ (223 aa)). 42 to 49 (GASGSGKS) contacts ATP.

It belongs to the ABC transporter superfamily. Lipoprotein translocase (TC 3.A.1.125) family. The complex is composed of two ATP-binding proteins (LolD) and two transmembrane proteins (LolC and LolE).

Its subcellular location is the cell inner membrane. In terms of biological role, part of the ABC transporter complex LolCDE involved in the translocation of mature outer membrane-directed lipoproteins, from the inner membrane to the periplasmic chaperone, LolA. Responsible for the formation of the LolA-lipoprotein complex in an ATP-dependent manner. The sequence is that of Lipoprotein-releasing system ATP-binding protein LolD from Saccharophagus degradans (strain 2-40 / ATCC 43961 / DSM 17024).